A 156-amino-acid polypeptide reads, in one-letter code: 6,7-dimethyl-8-ribityllumazine synthase (156 aa).

Residues Phe-25, 59–61 (AFE), and 83–85 (AVI) each bind 5-amino-6-(D-ribitylamino)uracil. A (2S)-2-hydroxy-3-oxobutyl phosphate-binding site is contributed by 88-89 (GT). Catalysis depends on His-91, which acts as the Proton donor. Residue Phe-116 participates in 5-amino-6-(D-ribitylamino)uracil binding. A (2S)-2-hydroxy-3-oxobutyl phosphate-binding site is contributed by Arg-130.

Belongs to the DMRL synthase family.

It catalyses the reaction (2S)-2-hydroxy-3-oxobutyl phosphate + 5-amino-6-(D-ribitylamino)uracil = 6,7-dimethyl-8-(1-D-ribityl)lumazine + phosphate + 2 H2O + H(+). It participates in cofactor biosynthesis; riboflavin biosynthesis; riboflavin from 2-hydroxy-3-oxobutyl phosphate and 5-amino-6-(D-ribitylamino)uracil: step 1/2. Functionally, catalyzes the formation of 6,7-dimethyl-8-ribityllumazine by condensation of 5-amino-6-(D-ribitylamino)uracil with 3,4-dihydroxy-2-butanone 4-phosphate. This is the penultimate step in the biosynthesis of riboflavin. The sequence is that of 6,7-dimethyl-8-ribityllumazine synthase from Desulfovibrio desulfuricans (strain ATCC 27774 / DSM 6949 / MB).